A 22-amino-acid polypeptide reads, in one-letter code: C-type natriuretic peptide (22 aa).

C6 and C22 are disulfide-bonded.

Belongs to the natriuretic peptide family.

It is found in the secreted. Hormone which plays a role in endochondral ossification through regulation of cartilaginous growth plate chondrocytes proliferation and differentiation. May also be vasoactive and natriuretic. Specifically binds and stimulates the cGMP production of the NPR2 receptor. Binds the clearance receptor NPR3. This Gallus gallus (Chicken) protein is C-type natriuretic peptide (NPPC).